Consider the following 612-residue polypeptide: Proline-rich protein 14 (612 aa).

An N-acetylmethionine modification is found at Met-1. Polar residues-rich tracts occupy residues 1–15 (MDLP…QPSL) and 86–96 (VCTQSPALPSQ). Disordered stretches follow at residues 1–48 (MDLP…EKAS), 65–96 (VPLT…LPSQ), 119–150 (RARQ…QVPQ), and 206–256 (PTLT…PALE). Positions 1 to 135 (MDLPGNSSPF…ALRMRSRAAS (135 aa)) are sufficient for heterochromatin association in interphase and chromatin association in anaphase. Residues 85-405 (PVCTQSPALP…MARTPPPPRP (321 aa)) are required for the interaction with GRB2 and sufficient to promote the phosphorylation of AKT and cell proliferation. A required for nuclear lamina association region spans residues 136 to 392 (GPEESPSKKT…QSRPRRHTVG (257 aa)). Residues 243–252 (ADPPESPVPD) show a composition bias toward pro residues. The residue at position 307 (Ser-307) is a Phosphoserine. Disordered stretches follow at residues 323 to 405 (QSRA…PPRP), 444 to 463 (LGST…FSDP), and 553 to 583 (DSSL…PSQD). Positions 342 to 359 (WRTQCNSLAPVSKSSLGR) are enriched in polar residues. A compositionally biased stretch (pro residues) spans 366 to 379 (LGPPDPGSWPPVPS). The segment covering 448 to 463 (KGKELRASKDKVFSDP) has biased composition (basic and acidic residues). A required for nuclear localization region spans residues 546–563 (RRAVEFRDSSLPRSRRPS). Over residues 570 to 583 (ASRTLTPNLAPSQD) the composition is skewed to polar residues.

As to quaternary structure, interacts (via proline-rich region) with GRB2 (via SH3 domain 2). Interacts (via N-terminus) with CBX5.

The protein resides in the chromosome. It is found in the nucleus. The protein localises to the nucleus lamina. It localises to the nucleoplasm. Functions in tethering peripheral heterochromatin to the nuclear lamina during interphase, possibly through the interaction with heterochromatin protein CBX5/HP1 alpha. Might play a role in reattaching heterochromatin to the nuclear lamina at mitotic exit. Promotes myoblast differentiation during skeletal myogenesis, possibly by stimulating transcription factor MyoD activity via binding to CBX5/HP1 alpha. Involved in the positive regulation of the PI3K-Akt-mTOR signaling pathway and in promoting cell proliferation, possibly via binding to GRB2. In Mus musculus (Mouse), this protein is Proline-rich protein 14 (Prr14).